A 475-amino-acid chain; its full sequence is Bifunctional protein HldE (475 aa).

Residues 1–318 (MKITLPEFEK…ANALYTEQET (318 aa)) form a ribokinase region. ATP is bound at residue 195-198 (NMSE). The active site involves Asp264. The interval 344–475 (MTNGCFDILH…DIIKTIRERG (132 aa)) is cytidylyltransferase.

In the N-terminal section; belongs to the carbohydrate kinase PfkB family. The protein in the C-terminal section; belongs to the cytidylyltransferase family. Homodimer.

The enzyme catalyses D-glycero-beta-D-manno-heptose 7-phosphate + ATP = D-glycero-beta-D-manno-heptose 1,7-bisphosphate + ADP + H(+). The catalysed reaction is D-glycero-beta-D-manno-heptose 1-phosphate + ATP + H(+) = ADP-D-glycero-beta-D-manno-heptose + diphosphate. Its pathway is nucleotide-sugar biosynthesis; ADP-L-glycero-beta-D-manno-heptose biosynthesis; ADP-L-glycero-beta-D-manno-heptose from D-glycero-beta-D-manno-heptose 7-phosphate: step 1/4. The protein operates within nucleotide-sugar biosynthesis; ADP-L-glycero-beta-D-manno-heptose biosynthesis; ADP-L-glycero-beta-D-manno-heptose from D-glycero-beta-D-manno-heptose 7-phosphate: step 3/4. Its function is as follows. Catalyzes the phosphorylation of D-glycero-D-manno-heptose 7-phosphate at the C-1 position to selectively form D-glycero-beta-D-manno-heptose-1,7-bisphosphate. Functionally, catalyzes the ADP transfer from ATP to D-glycero-beta-D-manno-heptose 1-phosphate, yielding ADP-D-glycero-beta-D-manno-heptose. This chain is Bifunctional protein HldE, found in Aeromonas hydrophila subsp. hydrophila (strain ATCC 7966 / DSM 30187 / BCRC 13018 / CCUG 14551 / JCM 1027 / KCTC 2358 / NCIMB 9240 / NCTC 8049).